The primary structure comprises 284 residues: 2-dehydro-3-deoxyphosphooctonate aldolase (284 aa).

This sequence belongs to the KdsA family.

Its subcellular location is the cytoplasm. The enzyme catalyses D-arabinose 5-phosphate + phosphoenolpyruvate + H2O = 3-deoxy-alpha-D-manno-2-octulosonate-8-phosphate + phosphate. It functions in the pathway carbohydrate biosynthesis; 3-deoxy-D-manno-octulosonate biosynthesis; 3-deoxy-D-manno-octulosonate from D-ribulose 5-phosphate: step 2/3. It participates in bacterial outer membrane biogenesis; lipopolysaccharide biosynthesis. This chain is 2-dehydro-3-deoxyphosphooctonate aldolase, found in Burkholderia orbicola (strain MC0-3).